We begin with the raw amino-acid sequence, 238 residues long: CD63 antigen (238 aa).

At 1–11 the chain is on the cytoplasmic side; that stretch reads MAVEGGMKCVK. The chain crosses the membrane as a helical span at residues 12–32; sequence FLLYVLLLAFCACAVGLIAVG. Over 33–51 the chain is Extracellular; the sequence is VGAQLVLSQTITHGATPGS. A helical membrane pass occupies residues 52–72; that stretch reads LLPVVIIAVGAFLFLVAFVGC. The Cytoplasmic segment spans residues 73–81; that stretch reads CGTCKENYC. The helical transmembrane segment at 82 to 102 threads the bilayer; it reads LMITFAIFLSLIMLVEVAAAI. The Extracellular segment spans residues 103 to 203; sequence AGYVFRDKVM…KIGLWLRKNV (101 aa). N-linked (GlcNAc...) asparagine glycosylation is found at asparagine 125, asparagine 130, asparagine 150, and asparagine 172. Residues 204–224 traverse the membrane as a helical segment; that stretch reads LVVAAAALGIAFVEVLGIVFA. The Cytoplasmic portion of the chain corresponds to 225–238; that stretch reads CCLVKSIRSGYEVM. Positions 234 to 238 match the Lysosomal targeting motif motif; sequence GYEVM.

The protein belongs to the tetraspanin (TM4SF) family. In terms of assembly, interacts with TIMP1 and ITGB1 and recruits TIMP1 to ITGB1. Interacts with CD9. Identified in a complex with CD9 and ITGB3. Interacts with PMEL. Interacts with KDR/VEGFR2; identified in a complex with ITGB1 and KDR/VEGFR2 and is required to recruit KDR to ITGB1 complexes. Interacts with SYT7. In terms of processing, palmitoylated at a low, basal level in unstimulated platelets. The level of palmitoylation increases when platelets are activated by thrombin (in vitro).

It is found in the cell membrane. The protein localises to the lysosome membrane. Its subcellular location is the late endosome membrane. The protein resides in the endosome. It localises to the multivesicular body. It is found in the melanosome. The protein localises to the secreted. Its subcellular location is the extracellular exosome. The protein resides in the cell surface. Functions as a cell surface receptor for TIMP1 and plays a role in the activation of cellular signaling cascades. Plays a role in the activation of ITGB1 and integrin signaling, leading to the activation of AKT, FAK/PTK2 and MAP kinases. Promotes cell survival, reorganization of the actin cytoskeleton, cell adhesion, spreading and migration, via its role in the activation of AKT and FAK/PTK2. Plays a role in VEGFA signaling via its role in regulating the internalization of KDR/VEGFR2. Plays a role in intracellular vesicular transport processes, and is required for normal trafficking of the PMEL luminal domain that is essential for the development and maturation of melanocytes. Plays a role in the adhesion of leukocytes onto endothelial cells via its role in the regulation of SELP trafficking. May play a role in mast cell degranulation in response to Ms4a2/FceRI stimulation, but not in mast cell degranulation in response to other stimuli. This Oryctolagus cuniculus (Rabbit) protein is CD63 antigen (CD63).